The following is a 110-amino-acid chain: Minor capsid protein VP2 (110 aa).

Belongs to the vesivirus VP2 protein family. Homooligomer. The portal-like structure consists in 12 copies of VP2. Interacts with capsid protein VP1.

It is found in the virion. The protein localises to the host cytoplasm. Its function is as follows. Minor structural protein that forms a portal-like structure at a unique three-fold axis of symmetry, following binding to the host receptor. The channel formed by VP2 may allow the delivery of the viral genome through the host endosomal membrane. The sequence is that of Minor capsid protein VP2 from Otariidae (fur seals &amp; sea lions).